Here is a 321-residue protein sequence, read N- to C-terminus: Ribonuclease Z (321 aa).

Zn(2+)-binding residues include His62, His64, Asp66, His67, His139, Asp210, and His268. Asp66 acts as the Proton acceptor in catalysis.

Belongs to the RNase Z family. In terms of assembly, homodimer. Requires Zn(2+) as cofactor.

It carries out the reaction Endonucleolytic cleavage of RNA, removing extra 3' nucleotides from tRNA precursor, generating 3' termini of tRNAs. A 3'-hydroxy group is left at the tRNA terminus and a 5'-phosphoryl group is left at the trailer molecule.. Zinc phosphodiesterase, which displays some tRNA 3'-processing endonuclease activity. Probably involved in tRNA maturation, by removing a 3'-trailer from precursor tRNA. The polypeptide is Ribonuclease Z (Trichodesmium erythraeum (strain IMS101)).